Reading from the N-terminus, the 711-residue chain is Double-stranded RNA-specific editase 1 (711 aa).

Residues 1 to 79 are disordered; the sequence is MDIEDEENMS…RRKTPGPVLP (79 aa). Basic residues predominate over residues 63–73; that stretch reads SKYRLKKRRKT. The DRBM 1 domain occupies 78–144; that stretch reads LPKNALMQLN…AEKALRSFVQ (67 aa). Interaction with substrate RNA stretches follow at residues 83 to 88 and 104 to 105; these read LMQLNE and VH. S149 is modified (phosphoserine). The disordered stretch occupies residues 176 to 220; that stretch reads LFNGFETPDKSEPPFYVGSNGDDSFSSSGDVSLSASPVPASLTQP. Over residues 192-213 the composition is skewed to low complexity; it reads VGSNGDDSFSSSGDVSLSASPV. The DRBM 2 domain occupies 231-298; sequence PSGKNPVMIL…AQSALATVFN (68 aa). Interaction with substrate RNA stretches follow at residues 237–242 and H259; that span reads VMILNE. The A to I editase domain maps to 370–707; the sequence is SVSTGTKCIN…VEKPTEQDQF (338 aa). H394 contributes to the Zn(2+) binding site. The active-site Proton donor is E396. Residues R400 and R401 each coordinate 1D-myo-inositol hexakisphosphate. Residues C451 and C526 each contribute to the Zn(2+) site. 1D-myo-inositol hexakisphosphate contacts are provided by K529, R532, K639, K672, K682, and K700.

As to quaternary structure, homodimer. Homodimerization is essential for its catalytic activity. Can form heterodimers with isoform 5 of ADAR/ADAR1. It depends on 1D-myo-inositol hexakisphosphate as a cofactor. As to expression, brain and peripheral tissues.

It localises to the nucleus. The protein resides in the nucleolus. The catalysed reaction is adenosine in double-stranded RNA + H2O + H(+) = inosine in double-stranded RNA + NH4(+). Functionally, catalyzes the hydrolytic deamination of adenosine to inosine in double-stranded RNA (dsRNA) referred to as A-to-I RNA editing. This may affect gene expression and function in a number of ways that include mRNA translation by changing codons and hence the amino acid sequence of proteins; pre-mRNA splicing by altering splice site recognition sequences; RNA stability by changing sequences involved in nuclease recognition; genetic stability in the case of RNA virus genomes by changing sequences during viral RNA replication; and RNA structure-dependent activities such as microRNA production or targeting or protein-RNA interactions. Can edit both viral and cellular RNAs and can edit RNAs at multiple sites (hyper-editing) or at specific sites (site-specific editing). Its cellular RNA substrates include: bladder cancer-associated protein (BLCAP), neurotransmitter receptors for glutamate (GRIA2 and GRIK2) and serotonin (HTR2C), GABA receptor (GABRA3) and potassium voltage-gated channel (KCNA1). Site-specific RNA editing of transcripts encoding these proteins results in amino acid substitutions which consequently alter their functional activities. Edits GRIA2 at both the Q/R and R/G sites efficiently but converts the adenosine in hotspot1 much less efficiently. Can inhibit cell proliferation and migration and can stimulate exocytosis. This is Double-stranded RNA-specific editase 1 (Adarb1) from Rattus norvegicus (Rat).